Consider the following 428-residue polypeptide: Enolase (428 aa).

Residue Gln-167 participates in (2R)-2-phosphoglycerate binding. The active-site Proton donor is the Glu-209. 3 residues coordinate Mg(2+): Asp-246, Glu-289, and Asp-316. Positions 341, 370, 371, and 392 each coordinate (2R)-2-phosphoglycerate. Catalysis depends on Lys-341, which acts as the Proton acceptor.

It belongs to the enolase family. As to quaternary structure, component of the RNA degradosome, a multiprotein complex involved in RNA processing and mRNA degradation. Mg(2+) is required as a cofactor.

It is found in the cytoplasm. The protein localises to the secreted. The protein resides in the cell surface. The catalysed reaction is (2R)-2-phosphoglycerate = phosphoenolpyruvate + H2O. Its pathway is carbohydrate degradation; glycolysis; pyruvate from D-glyceraldehyde 3-phosphate: step 4/5. Catalyzes the reversible conversion of 2-phosphoglycerate (2-PG) into phosphoenolpyruvate (PEP). It is essential for the degradation of carbohydrates via glycolysis. This is Enolase from Saccharophagus degradans (strain 2-40 / ATCC 43961 / DSM 17024).